We begin with the raw amino-acid sequence, 216 residues long: NADH-quinone oxidoreductase subunit C (216 aa).

The protein belongs to the complex I 30 kDa subunit family. In terms of assembly, NDH-1 is composed of 14 different subunits. Subunits NuoB, C, D, E, F, and G constitute the peripheral sector of the complex.

Its subcellular location is the cell inner membrane. The enzyme catalyses a quinone + NADH + 5 H(+)(in) = a quinol + NAD(+) + 4 H(+)(out). In terms of biological role, NDH-1 shuttles electrons from NADH, via FMN and iron-sulfur (Fe-S) centers, to quinones in the respiratory chain. The immediate electron acceptor for the enzyme in this species is believed to be ubiquinone. Couples the redox reaction to proton translocation (for every two electrons transferred, four hydrogen ions are translocated across the cytoplasmic membrane), and thus conserves the redox energy in a proton gradient. The polypeptide is NADH-quinone oxidoreductase subunit C (Francisella tularensis subsp. tularensis (strain FSC 198)).